A 136-amino-acid chain; its full sequence is Large-conductance mechanosensitive channel (136 aa).

2 consecutive transmembrane segments (helical) span residues 9 to 29 and 79 to 99; these read AFASRGNVIDMAVGIIIGAAF and IQTIIDFTIIAFAIFMGLKAI.

The protein belongs to the MscL family. As to quaternary structure, homopentamer.

The protein resides in the cell inner membrane. Its function is as follows. Channel that opens in response to stretch forces in the membrane lipid bilayer. May participate in the regulation of osmotic pressure changes within the cell. The polypeptide is Large-conductance mechanosensitive channel (Shewanella sp. (strain ANA-3)).